A 402-amino-acid chain; its full sequence is Endoplasmic reticulum junction formation protein lunapark-B (402 aa).

Over 1–45 the chain is Cytoplasmic; that stretch reads MGAIISRWKTKPSTVELLESLDKDIKDLEEFRAKNQRLLKLWVGR. Residues 46 to 66 form a helical membrane-spanning segment; it reads LLFYSSALYLLTCLCVYYLYF. The Lumenal segment spans residues 67–77; sequence PQQWGARLITA. Residues 78-98 form a helical membrane-spanning segment; sequence LPLLAFPALVLLLRKMLIFLF. Topologically, residues 99-402 are cytoplasmic; that stretch reads SKRTERNNDK…EEQKKEDESN (304 aa). Positions 100–128 form a coiled coil; that stretch reads KRTERNNDKLEDLKTQKRKILEEVMETET. Positions 142-240 are disordered; the sequence is ESKKKAEAEA…PGPGSGMRPP (99 aa). Positions 205–222 are enriched in polar residues; sequence SASTPAGASQAETPQQMM. A C4-type; plays a role in ER morphology zinc finger spans residues 276 to 301; it reads CQQCFSHNGMALKEEFEFVAFRCAYC. Positions 311–402 are disordered; it reads RPQAPRLPEF…EEQKKEDESN (92 aa). Basic and acidic residues predominate over residues 321-330; sequence SFERRLRSES. The segment covering 341–352 has biased composition (acidic residues); that stretch reads TPEDSDAPEDDM. Positions 385–402 are enriched in basic and acidic residues; it reads PHAEAEALEEQKKEDESN.

The protein belongs to the lunapark family. As to quaternary structure, homodimer; homodimerization requires the C4-type zinc finger motif and decreases during mitosis in a phosphorylation-dependent manner. In terms of processing, phosphorylated. Phosphorylation occurs during interphase. Phosphorylation also occurs during mitosis; these phosphorylations reduce both its homodimerization and the ER three-way tubular junction formation.

It is found in the endoplasmic reticulum membrane. Its function is as follows. Endoplasmic reticulum (ER)-shaping membrane protein that plays a role in determining ER morphology. Involved in the stabilization of nascent three-way ER tubular junctions within the ER network. May also play a role as a curvature-stabilizing protein within three-way ER tubular junction network. The sequence is that of Endoplasmic reticulum junction formation protein lunapark-B (lnpkb) from Danio rerio (Zebrafish).